A 509-amino-acid chain; its full sequence is Photosystem II CP47 reaction center protein (509 aa).

A run of 6 helical transmembrane segments spans residues 21 to 36 (AVHL…WAGS), 101 to 115 (IGLS…IWHW), 140 to 156 (GIHL…FGAF), 203 to 218 (IAAG…FHLS), 237 to 252 (VLSS…AFIV), and 457 to 472 (SFAL…HGGR).

The protein belongs to the PsbB/PsbC family. PsbB subfamily. PSII is composed of 1 copy each of membrane proteins PsbA, PsbB, PsbC, PsbD, PsbE, PsbF, PsbH, PsbI, PsbJ, PsbK, PsbL, PsbM, PsbT, PsbX, PsbY, PsbZ, Psb30/Ycf12, at least 3 peripheral proteins of the oxygen-evolving complex and a large number of cofactors. It forms dimeric complexes. Binds multiple chlorophylls. PSII binds additional chlorophylls, carotenoids and specific lipids. serves as cofactor.

Its subcellular location is the plastid. The protein localises to the cyanelle thylakoid membrane. In terms of biological role, one of the components of the core complex of photosystem II (PSII). It binds chlorophyll and helps catalyze the primary light-induced photochemical processes of PSII. PSII is a light-driven water:plastoquinone oxidoreductase, using light energy to abstract electrons from H(2)O, generating O(2) and a proton gradient subsequently used for ATP formation. This is Photosystem II CP47 reaction center protein from Cyanophora paradoxa.